Consider the following 162-residue polypeptide: Caveolin-2 (162 aa).

Residues 1 to 86 (MGLETEKADV…FEISKYVMYK (86 aa)) lie on the Cytoplasmic side of the membrane. The residue at position 19 (Tyr-19) is a Phosphotyrosine. Residues Ser-20 and Ser-36 each carry the phosphoserine modification. The segment at residues 87-107 (FLTVFLAIPLAFVAGILFATL) is an intramembrane region (helical). Residues 108 to 162 (SCLHIWIIMPFVKTCLMVLPSVQTIWKSVTDVIIAPLCTSVGRSFSSISLQLSHD) lie on the Cytoplasmic side of the membrane.

This sequence belongs to the caveolin family. As to quaternary structure, homodimer. Caveolin-1 and -2 colocalize and form a stable hetero-oligomeric complex.

The protein localises to the golgi apparatus membrane. It localises to the cell membrane. It is found in the membrane. Its subcellular location is the caveola. Its function is as follows. May act as a scaffolding protein within caveolar membranes. Interacts directly with G-protein alpha subunits and can functionally regulate their activity. Caveolin-2 may function as an accessory protein in conjunction with caveolin-1. The sequence is that of Caveolin-2 (CAV2) from Microcebus murinus (Gray mouse lemur).